A 543-amino-acid polypeptide reads, in one-letter code: Protein SGE1 (543 aa).

Topologically, residues 1–8 (MKSTLSLT) are cytoplasmic. Residues 9–29 (LCVISLLLTLFLAALDIVIVV) traverse the membrane as a helical segment. The Extracellular portion of the chain corresponds to 30–41 (TLYDTIGIKFHD). Residues 42 to 62 (FGNIGWLVTGYALSNAVFMLL) form a helical membrane-spanning segment. The Cytoplasmic segment spans residues 63–79 (WGRLAEILGTKECLMIS). Residues 80 to 100 (VIVFEIGSLISALSNSMATLI) form a helical membrane-spanning segment. Topologically, residues 101–103 (SGR) are extracellular. A helical transmembrane segment spans residues 104 to 124 (VVAGFGGSGIESLAFVVGTSI). Topologically, residues 125–131 (VRENHRG) are cytoplasmic. Residues 132-152 (IMITALAISYVIAEGVGPFIG) traverse the membrane as a helical segment. Topologically, residues 153-162 (GAFNEHLSWR) are extracellular. The helical transmembrane segment at 163–183 (WCFYINLPIGAFAFIILAFCN) threads the bilayer. Residues 184-227 (TSGEPHQKMWLPSKIKKIMNYDYGELLKASFWKNTFEVLVFKLD) lie on the Cytoplasmic side of the membrane. The chain crosses the membrane as a helical span at residues 228-248 (MVGIILSSAGFTLLMLGLSFG). Over 249 to 255 (GNNFPWN) the chain is Extracellular. Residues 256-276 (SGIIICFFTVGPILLLLFCAY) form a helical membrane-spanning segment. At 277–300 (DFHFLSLSGLHYDNKRIKPLLTWN) the chain is on the cytoplasmic side. Residues 301-321 (IASNCGIFTSSITGFLSCFAY) form a helical membrane-spanning segment. Residues 322–341 (ELQSAYLVQLYQLVFKKKPT) lie on the Extracellular side of the membrane. The helical transmembrane segment at 342–362 (LASIHLWELSIPAMIATMAIA) threads the bilayer. Residues 363-373 (YLNSKYGIIKP) lie on the Cytoplasmic side of the membrane. The chain crosses the membrane as a helical span at residues 374 to 394 (AIVFGVLCGIVGSGLFTLING). At 395–399 (ELSQS) the chain is on the extracellular side. A helical membrane pass occupies residues 400–420 (IGYSILPGIAFGSIFQATLLS). Topologically, residues 421–443 (SQVQITSDDPDFQNKFIEVTAFN) are cytoplasmic. The helical transmembrane segment at 444-464 (SFAKSLGFAFGGNMGAMIFTA) threads the bilayer. Over 465–508 (SLKNQMRSSQLNIPQFTSVETLLAYSTEHYDGPQSSLSKFINTA) the chain is Extracellular. A helical transmembrane segment spans residues 509–529 (IHDVFYCALGCYALSFFFGIF). Topologically, residues 530-543 (TSSKKTTISAKKQQ) are cytoplasmic.

The protein belongs to the major facilitator superfamily.

It localises to the membrane. Drug export permease. Multi-copy suppressor of loss-of-function mutation of GAL11. Involved specifically in transcription of GAL4-dependent genes. Can link GAL4 with the basal transcription machinery if GAL11 is missing. Confers resistance to 10-N-nonyl acridine orange (NAO) and in general to cationic dyes. This is Protein SGE1 (SGE1) from Saccharomyces cerevisiae (strain ATCC 204508 / S288c) (Baker's yeast).